A 261-amino-acid polypeptide reads, in one-letter code: Membrane protein insertase MisCA (261 aa).

An N-terminal signal peptide occupies residues 1–22 (MLLKRRIGLLLSMVGVFMLLAG). The N-palmitoyl cysteine moiety is linked to residue C23. The S-diacylglycerol cysteine moiety is linked to residue C23. 5 helical membrane passes run 61 to 81 (YGLS…PLMI), 131 to 151 (LAGC…YHAI), 174 to 194 (YILP…MMAG), 204 to 224 (MMLW…PAAL), and 225 to 245 (SLYW…IKGP).

It belongs to the OXA1/ALB3/YidC family. Type 2 subfamily. As to quaternary structure, mostly monomeric, it may also form dimers. Interacts with SpoIIIAE. Forms a complex with the F(1)F(0) ATP synthase in which can be found the alpha, beta, gamma, delta and epsilon subunits of F(1) and a, b and subunits of F(0). YqgA is found in the same complex.

The protein localises to the cell membrane. In terms of biological role, required for the insertion and/or proper folding and/or complex formation of integral membrane proteins into the membrane. Involved in integration of membrane proteins that insert both dependently and independently of the Sec translocase complex, as well as at least some lipoproteins. Also involved in protein secretion processes. Essential for sporulation by activating sigma factor SpoIIIG/SigG after engulfment is completed in the prespore, maybe by acting on SpoIIIAE. It has an overlapping, although partly distinct, function compared to YqjG(MisCB). This Bacillus subtilis (strain 168) protein is Membrane protein insertase MisCA (misCA).